The following is an 828-amino-acid chain: Periplasmic nitrate reductase (828 aa).

Positions 1 to 31 form a signal peptide, tat-type signal; sequence MKLSRRSFMKANAVAAVAAAAGLSVPGVARA. The 4Fe-4S Mo/W bis-MGD-type domain occupies 39–95; that stretch reads IKWDKAPCRFCGTGCGVLVGTQQGRVVACQGDPDAPVNRGLNCIKGYFLPKIMYGKD. The [4Fe-4S] cluster site is built by Cys46, Cys49, Cys53, and Cys81. Residues Lys83, Gln150, Asn175, Cys179, 212–219, 243–247, 262–264, Met372, Gln376, Asn482, 508–509, Lys531, Asp558, and 718–727 each bind Mo-bis(molybdopterin guanine dinucleotide); these read WGANMAEM, STYQH, QSD, SD, and TGRVLEHWHT. Position 794 (Phe794) interacts with substrate. Mo-bis(molybdopterin guanine dinucleotide) contacts are provided by Asn802 and Lys819.

Belongs to the prokaryotic molybdopterin-containing oxidoreductase family. NasA/NapA/NarB subfamily. In terms of assembly, component of the periplasmic nitrate reductase NapAB complex composed of NapA and NapB. The cofactor is [4Fe-4S] cluster. Mo-bis(molybdopterin guanine dinucleotide) serves as cofactor. Predicted to be exported by the Tat system. The position of the signal peptide cleavage has not been experimentally proven.

It localises to the periplasm. It catalyses the reaction 2 Fe(II)-[cytochrome] + nitrate + 2 H(+) = 2 Fe(III)-[cytochrome] + nitrite + H2O. In terms of biological role, catalytic subunit of the periplasmic nitrate reductase complex NapAB. Receives electrons from NapB and catalyzes the reduction of nitrate to nitrite. The protein is Periplasmic nitrate reductase of Shigella boydii serotype 4 (strain Sb227).